A 331-amino-acid chain; its full sequence is Ketol-acid reductoisomerase (NADP(+)) (331 aa).

The KARI N-terminal Rossmann domain maps to 2–182 (AQLFYDSDAD…GGTRAGILET (181 aa)). Residues 25 to 28 (YGSQ), serine 51, serine 53, and 83 to 86 (DEFQ) contribute to the NADP(+) site. Residue histidine 108 is part of the active site. Glycine 134 provides a ligand contact to NADP(+). A KARI C-terminal knotted domain is found at 183–328 (NFKEETETDL…KGLRSMFSWL (146 aa)). Mg(2+)-binding residues include aspartate 191, glutamate 195, glutamate 227, and glutamate 231. Residue serine 252 participates in substrate binding.

It belongs to the ketol-acid reductoisomerase family. The cofactor is Mg(2+).

The enzyme catalyses (2R)-2,3-dihydroxy-3-methylbutanoate + NADP(+) = (2S)-2-acetolactate + NADPH + H(+). It carries out the reaction (2R,3R)-2,3-dihydroxy-3-methylpentanoate + NADP(+) = (S)-2-ethyl-2-hydroxy-3-oxobutanoate + NADPH + H(+). It participates in amino-acid biosynthesis; L-isoleucine biosynthesis; L-isoleucine from 2-oxobutanoate: step 2/4. Its pathway is amino-acid biosynthesis; L-valine biosynthesis; L-valine from pyruvate: step 2/4. Its function is as follows. Involved in the biosynthesis of branched-chain amino acids (BCAA). Catalyzes an alkyl-migration followed by a ketol-acid reduction of (S)-2-acetolactate (S2AL) to yield (R)-2,3-dihydroxy-isovalerate. In the isomerase reaction, S2AL is rearranged via a Mg-dependent methyl migration to produce 3-hydroxy-3-methyl-2-ketobutyrate (HMKB). In the reductase reaction, this 2-ketoacid undergoes a metal-dependent reduction by NADPH to yield (R)-2,3-dihydroxy-isovalerate. This is Ketol-acid reductoisomerase (NADP(+)) from Synechococcus sp. (strain CC9311).